The chain runs to 413 residues: Aspartate aminotransferase, cytoplasmic (413 aa).

The L-aspartate site is built by G39 and W141. The residue at position 149 (S149) is a Phosphoserine. N195 provides a ligand contact to L-aspartate. K259 is modified (N6-(pyridoxal phosphate)lysine). K318 bears the N6-succinyllysine mark. Residue R387 coordinates L-aspartate.

This sequence belongs to the class-I pyridoxal-phosphate-dependent aminotransferase family. As to quaternary structure, homodimer. Pyridoxal 5'-phosphate serves as cofactor. As to expression, expressed in neurons of the retina. Localizes to the inner and outer plexiform layers, the inner and outer nuclear layer and the outer segments of photoreceptors.

It localises to the cytoplasm. The catalysed reaction is L-aspartate + 2-oxoglutarate = oxaloacetate + L-glutamate. It carries out the reaction L-cysteine + 2-oxoglutarate = 2-oxo-3-sulfanylpropanoate + L-glutamate. The enzyme catalyses (2S)-2-aminobutanoate + 2-oxoglutarate = 2-oxobutanoate + L-glutamate. It catalyses the reaction 3-sulfino-L-alanine + 2-oxoglutarate = 3-sulfinopyruvate + L-glutamate. With respect to regulation, inhibited by calcium ions. In terms of biological role, biosynthesis of L-glutamate from L-aspartate or L-cysteine. Important regulator of levels of glutamate, the major excitatory neurotransmitter of the vertebrate central nervous system. Acts as a scavenger of glutamate in brain neuroprotection. The aspartate aminotransferase activity is involved in hepatic glucose synthesis during development and in adipocyte glyceroneogenesis. Using L-cysteine as substrate, regulates levels of mercaptopyruvate, an important source of hydrogen sulfide. Mercaptopyruvate is converted into H(2)S via the action of 3-mercaptopyruvate sulfurtransferase (3MST). Hydrogen sulfide is an important synaptic modulator and neuroprotectant in the brain. In Mus musculus (Mouse), this protein is Aspartate aminotransferase, cytoplasmic.